Reading from the N-terminus, the 356-residue chain is UDP-3-O-acylglucosamine N-acyltransferase (356 aa).

The active-site Proton acceptor is His-242.

The protein belongs to the transferase hexapeptide repeat family. LpxD subfamily. As to quaternary structure, homotrimer.

It carries out the reaction a UDP-3-O-[(3R)-3-hydroxyacyl]-alpha-D-glucosamine + a (3R)-hydroxyacyl-[ACP] = a UDP-2-N,3-O-bis[(3R)-3-hydroxyacyl]-alpha-D-glucosamine + holo-[ACP] + H(+). It functions in the pathway bacterial outer membrane biogenesis; LPS lipid A biosynthesis. Its function is as follows. Catalyzes the N-acylation of UDP-3-O-acylglucosamine using 3-hydroxyacyl-ACP as the acyl donor. Is involved in the biosynthesis of lipid A, a phosphorylated glycolipid that anchors the lipopolysaccharide to the outer membrane of the cell. This Acinetobacter baylyi (strain ATCC 33305 / BD413 / ADP1) protein is UDP-3-O-acylglucosamine N-acyltransferase.